We begin with the raw amino-acid sequence, 153 residues long: Methylglyoxal synthase (153 aa).

The MGS-like domain maps to 6-153 (RTIAARKHIA…QRYLAERLPS (148 aa)). Residues H19, K23, 45 to 48 (TGTT), and 65 to 66 (SG) contribute to the substrate site. D71 (proton donor/acceptor) is an active-site residue. Substrate is bound at residue H98.

It belongs to the methylglyoxal synthase family.

It carries out the reaction dihydroxyacetone phosphate = methylglyoxal + phosphate. Catalyzes the formation of methylglyoxal from dihydroxyacetone phosphate. The polypeptide is Methylglyoxal synthase (Sodalis glossinidius (strain morsitans)).